A 716-amino-acid polypeptide reads, in one-letter code: Fatty acid oxidation complex subunit alpha (716 aa).

An enoyl-CoA hydratase/isomerase region spans residues 1 to 189; the sequence is MIYQSPTIQV…KVGAVDAVVA (189 aa). Asp296 contributes to the substrate binding site. The interval 311–716 is 3-hydroxyacyl-CoA dehydrogenase; it reads KDVKSAAVLG…AANNGSYYQA (406 aa). NAD(+)-binding positions include Met324, Asp343, 400 to 402, Lys407, and Ser429; that span reads VVE. Residue His450 is the For 3-hydroxyacyl-CoA dehydrogenase activity of the active site. Residue Asn453 coordinates NAD(+). Residues Asn500 and Tyr660 each contribute to the substrate site.

The protein in the N-terminal section; belongs to the enoyl-CoA hydratase/isomerase family. In the C-terminal section; belongs to the 3-hydroxyacyl-CoA dehydrogenase family. As to quaternary structure, heterotetramer of two alpha chains (FadB) and two beta chains (FadA).

It carries out the reaction a (3S)-3-hydroxyacyl-CoA + NAD(+) = a 3-oxoacyl-CoA + NADH + H(+). The catalysed reaction is a (3S)-3-hydroxyacyl-CoA = a (2E)-enoyl-CoA + H2O. The enzyme catalyses a 4-saturated-(3S)-3-hydroxyacyl-CoA = a (3E)-enoyl-CoA + H2O. It catalyses the reaction (3S)-3-hydroxybutanoyl-CoA = (3R)-3-hydroxybutanoyl-CoA. It carries out the reaction a (3Z)-enoyl-CoA = a 4-saturated (2E)-enoyl-CoA. The catalysed reaction is a (3E)-enoyl-CoA = a 4-saturated (2E)-enoyl-CoA. It functions in the pathway lipid metabolism; fatty acid beta-oxidation. Functionally, involved in the aerobic and anaerobic degradation of long-chain fatty acids via beta-oxidation cycle. Catalyzes the formation of 3-oxoacyl-CoA from enoyl-CoA via L-3-hydroxyacyl-CoA. It can also use D-3-hydroxyacyl-CoA and cis-3-enoyl-CoA as substrate. This Shewanella sp. (strain MR-7) protein is Fatty acid oxidation complex subunit alpha.